Reading from the N-terminus, the 119-residue chain is uncharacterized protein (119 aa).

A coiled-coil region spans residues 6 to 36 (QAYLDIQGKIAEFRREIKALRVEEKAITANL). The tract at residues 95–119 (AVTGSSSNVKIRKSAPARNEEDDDG) is disordered.

This is an uncharacterized protein from Frog virus 3 (isolate Goorha) (FV-3).